Reading from the N-terminus, the 307-residue chain is Methionyl-tRNA formyltransferase (307 aa).

(6S)-5,6,7,8-tetrahydrofolate is bound at residue 108–111 (SLLP).

It belongs to the Fmt family.

The catalysed reaction is L-methionyl-tRNA(fMet) + (6R)-10-formyltetrahydrofolate = N-formyl-L-methionyl-tRNA(fMet) + (6S)-5,6,7,8-tetrahydrofolate + H(+). Functionally, attaches a formyl group to the free amino group of methionyl-tRNA(fMet). The formyl group appears to play a dual role in the initiator identity of N-formylmethionyl-tRNA by promoting its recognition by IF2 and preventing the misappropriation of this tRNA by the elongation apparatus. The sequence is that of Methionyl-tRNA formyltransferase from Xanthomonas oryzae pv. oryzae (strain MAFF 311018).